A 253-amino-acid chain; its full sequence is Phosphoglycerate mutase 2 (253 aa).

At threonine 3 the chain carries Phosphothreonine. Substrate-binding positions include 10–17, 23–24, arginine 62, 89–92, lysine 100, and 116–117; these read RHGESTWN, CG, ERHY, and RR. Histidine 11 serves as the catalytic Tele-phosphohistidine intermediate. Serine 14 carries the phosphoserine modification. Glutamate 89 serves as the catalytic Proton donor/acceptor. Serine 118 carries the phosphoserine modification. 2 positions are modified to phosphotyrosine: tyrosine 132 and tyrosine 133. Serine 135 is subject to Phosphoserine. Phosphothreonine is present on threonine 152. Residue 187–188 coordinates substrate; sequence GN.

This sequence belongs to the phosphoglycerate mutase family. BPG-dependent PGAM subfamily. In terms of assembly, homodimer.

The enzyme catalyses (2R)-2-phosphoglycerate = (2R)-3-phosphoglycerate. It catalyses the reaction (2R)-3-phospho-glyceroyl phosphate = (2R)-2,3-bisphosphoglycerate + H(+). In terms of biological role, interconversion of 3- and 2-phosphoglycerate with 2,3-bisphosphoglycerate as the primer of the reaction. Can also catalyze the reaction of EC 5.4.2.4 (synthase), but with a reduced activity. In Bos taurus (Bovine), this protein is Phosphoglycerate mutase 2 (PGAM2).